Reading from the N-terminus, the 575-residue chain is Sorting nexin-41 (575 aa).

The segment at 30–66 (TDGPDDYDFTEPSINGSSDENAQSNAVAEPIEETDEP) is disordered. Residues 41-55 (PSINGSSDENAQSNA) are compositionally biased toward polar residues. Residues 101 to 221 (QGKNPEVIRI…QKFLNPEYFW (121 aa)) form the PX domain. Positions 139, 141, 165, and 188 each coordinate a 1,2-diacyl-sn-glycero-3-phospho-(1D-myo-inositol-3-phosphate). Residues 467 to 486 (FRSSASPNNKSGSDSISSEV) form a disordered region. Residues 469–484 (SSASPNNKSGSDSISS) are compositionally biased toward polar residues.

The protein belongs to the sorting nexin family.

It is found in the endosome membrane. The protein localises to the endomembrane system. Functionally, may be required for cytoplasm to vacuole transport (Cvt) and pexophagy. This Kluyveromyces lactis (strain ATCC 8585 / CBS 2359 / DSM 70799 / NBRC 1267 / NRRL Y-1140 / WM37) (Yeast) protein is Sorting nexin-41 (SNX41).